We begin with the raw amino-acid sequence, 130 residues long: Small ribosomal subunit protein uS8 (130 aa).

The protein belongs to the universal ribosomal protein uS8 family. Part of the 30S ribosomal subunit. Contacts proteins S5 and S12.

In terms of biological role, one of the primary rRNA binding proteins, it binds directly to 16S rRNA central domain where it helps coordinate assembly of the platform of the 30S subunit. The chain is Small ribosomal subunit protein uS8 from Opitutus terrae (strain DSM 11246 / JCM 15787 / PB90-1).